A 143-amino-acid chain; its full sequence is Small ribosomal subunit protein uS11c (143 aa).

It belongs to the universal ribosomal protein uS11 family. In terms of assembly, part of the 30S ribosomal subunit.

It localises to the plastid. Its subcellular location is the chloroplast. This is Small ribosomal subunit protein uS11c from Zea mays (Maize).